A 538-amino-acid chain; its full sequence is UNC93-like protein (538 aa).

An N-linked (GlcNAc...) asparagine glycan is attached at N45. Helical transmembrane passes span 46-66 (ISII…TANL), 80-100 (SLSA…TLII), 105-125 (VKWT…FQLF), 128-148 (FYTL…MWAS), and 170-190 (AIIV…ELWG). N210 carries N-linked (GlcNAc...) asparagine glycosylation. The next 7 membrane-spanning stretches (helical) occupy residues 244–264 (IFEI…IIAF), 305–325 (LLIP…ADFT), 338–358 (IGFV…LFGS), 366–386 (TPII…ELFW), 394–414 (IIFY…QTQI), 435–455 (LWES…CTQM), and 457–477 (LYIL…VEIL).

The protein belongs to the unc-93 family.

It is found in the membrane. The polypeptide is UNC93-like protein (Drosophila melanogaster (Fruit fly)).